Consider the following 296-residue polypeptide: MGTIVLKMTAEQISVLQKDLASYATATKNPYAFFSAKVDGTSVIAYTSGKVTFQGAKPEILASRFGYQAEPKQSPDGQNLALIGSDEVGNGSYFGGLAVVASLVTPADHAFLKSLGVDDSKNLNDSKIRQIAPLLEEKIPHKALLLSPRKYNEVVGDGKAHNAVSVKVALHNQAIFLLLQSGAKPDKIVIDAFISEKNYQKYLKNERNHFEFPITLEEKAEGKYLAVAVSSIIARNLFLENLDKLSQEVGYTLPSGAGAKSDQVAAKLLQAYGDQALQTTAKYHFANTKKAYQRLK.

Residues 80–296 form the RNase H type-2 domain; the sequence is LALIGSDEVG…NTKKAYQRLK (217 aa). Residues aspartate 86, glutamate 87, and aspartate 191 each contribute to the a divalent metal cation site.

This sequence belongs to the RNase HII family. RnhC subfamily. Requires Mn(2+) as cofactor. It depends on Mg(2+) as a cofactor.

The protein resides in the cytoplasm. It catalyses the reaction Endonucleolytic cleavage to 5'-phosphomonoester.. Its function is as follows. Endonuclease that specifically degrades the RNA of RNA-DNA hybrids. In Streptococcus thermophilus (strain ATCC BAA-491 / LMD-9), this protein is Ribonuclease HIII.